The sequence spans 187 residues: Putative zinc finger protein 833 (187 aa).

6 C2H2-type zinc fingers span residues Tyr-10–His-32, Tyr-38–His-60, Tyr-66–His-88, Cys-94–His-116, Tyr-122–His-144, and Tyr-150–His-172.

The chain is Putative zinc finger protein 833 (ZNF833P) from Homo sapiens (Human).